The sequence spans 361 residues: Transcription factor MafA (361 aa).

S14 is modified (phosphoserine). K32 participates in a covalent cross-link: Glycyl lysine isopeptide (Lys-Gly) (interchain with G-Cter in SUMO2). 2 disordered regions span residues 40-105 and 175-228; these read RFCH…VGGA and GGAD…AGHH. Positions 46–76 are enriched in low complexity; it reads PPGSLSSTPLSTPCSSVPSSPSFCAPSPGTG. A Phosphoserine modification is found at S49. Residues T53 and T57 each carry the phosphothreonine modification. A phosphoserine mark is found at S61 and S65. Positions 183-211 are enriched in basic residues; it reads GHHHGAHHTAHHHHSAHHHHHHHHHHGGS. The segment covering 212–226 has biased composition (gly residues); it reads GHHGGGAGHGGGGAG. Residues 262 to 287 are basic motif; that stretch reads RLKQKRRTLKNRGYAQSCRFKRVQQR. Residues 262 to 325 form the bZIP domain; sequence RLKQKRRTLK…DLYKEKYEKL (64 aa). Residues 290 to 311 form a leucine-zipper region; that stretch reads LESEKCQLQSQVEQLKLEVGRL. Residues 324–361 are disordered; it reads KLAGRGGPGGAGGAGFPREPSPAQAGPGAAKGAPDFFL. Residues 327–338 are compositionally biased toward gly residues; that stretch reads GRGGPGGAGGAG. Over residues 345–361 the composition is skewed to low complexity; it reads PAQAGPGAAKGAPDFFL.

This sequence belongs to the bZIP family. In terms of assembly, forms homodimers. Monomers and dimers are able to bind DNA, but the off-rate is faster for monomers. Interacts with NEUROD1 and PDX1. May interact with MAFB, FOS, JUN and PCAF. Post-translationally, ubiquitinated, leading to its degradation by the proteasome. In terms of processing, phosphorylated at tyrosines.

It localises to the nucleus. Its function is as follows. Transcription factor that activates insulin gene expression. Acts synergistically with NEUROD1/BETA2 and PDX1. Binds the insulin enhancer C1/RIPE3b element. Binds to consensus TRE-type MARE 5'-TGCTGACTCAGCA-3' DNA sequence. The sequence is that of Transcription factor MafA (Mafa) from Rattus norvegicus (Rat).